The chain runs to 321 residues: MKPLNVIFAGTPDFAARHLQALIDSEHNVIAVYTQPDRPAGRGKKLQASPVKALALENDIAVFQPKSLRDEDAQAELAALNADIMVVVAYGLILPKVVLDTPRLGCINVHGSILPRWRGAAPIQRALWAGDTETGVTIMQMDIGLDTGDMLLKTLLPIEDNDTSSTLYEKLAEQGPTALVEALAGIAEGTLPAEKQDESLANYAEKLSKEEARLDWSKPASALWREIRAFNPWPVSHYEHEGNTIKVWQSSVSDETSSQQPGTILSADKSGISIATGEGVLTITQMQLPGKKPLSVADILNSRADWFTPGTVLASTDNQEA.

112-115 (SILP) is a (6S)-5,6,7,8-tetrahydrofolate binding site.

Belongs to the Fmt family.

It catalyses the reaction L-methionyl-tRNA(fMet) + (6R)-10-formyltetrahydrofolate = N-formyl-L-methionyl-tRNA(fMet) + (6S)-5,6,7,8-tetrahydrofolate + H(+). Attaches a formyl group to the free amino group of methionyl-tRNA(fMet). The formyl group appears to play a dual role in the initiator identity of N-formylmethionyl-tRNA by promoting its recognition by IF2 and preventing the misappropriation of this tRNA by the elongation apparatus. The protein is Methionyl-tRNA formyltransferase of Shewanella pealeana (strain ATCC 700345 / ANG-SQ1).